A 316-amino-acid polypeptide reads, in one-letter code: tRNA pseudouridine synthase B (316 aa).

D47 acts as the Nucleophile in catalysis.

This sequence belongs to the pseudouridine synthase TruB family. Type 1 subfamily.

The enzyme catalyses uridine(55) in tRNA = pseudouridine(55) in tRNA. Its function is as follows. Responsible for synthesis of pseudouridine from uracil-55 in the psi GC loop of transfer RNAs. This is tRNA pseudouridine synthase B from Aliivibrio fischeri (strain ATCC 700601 / ES114) (Vibrio fischeri).